An 818-amino-acid chain; its full sequence is FAD-dependent monooxygenase anuJ (818 aa).

FAD is bound by residues Glu46, Ala60, Arg122, Asp329, and Gly342. A run of 3 helical transmembrane segments spans residues 471–491 (VLWA…MFSV), 539–559 (FFYQ…IMLV), and 571–591 (LSFA…FVPI). Asn614 carries an N-linked (GlcNAc...) asparagine glycan. 2 helical membrane passes run 621–641 (ILPV…LSPV) and 647–667 (AAGF…AGLA). A glycan (N-linked (GlcNAc...) asparagine) is linked at Asn683. 2 helical membrane passes run 743-763 (WDQV…FADL) and 778-798 (FSAL…LMWL).

Belongs to the paxM FAD-dependent monooxygenase family.

It is found in the membrane. Its function is as follows. Highly reducing polyketide synthase; part of the gene cluster that mediates the biosynthesis of annullatin D, an alkylated aromatic polyketide with a fused dihydrobenzofuran lactone ring system that exhibits potent agonistic activities toward the cannabinoid receptors. AnuJ does not seem to play a role within the pathway. The annullatin backbone 2-hydroxymethyl-3-pentylphenol is assembled from one acetyl-CoA starter unit and 5 malonyl-CoA elongation units by cooperation of the highly reducing polyketide synthase anuA, the short-chain dehydrogenase anuB and the oxidoreductase anuC, before being hydroxylated at the C-5 alkyl chain by the cytochrome P450 monooxygenase anuE to form (8S)-annullatin E. The prenyltransferase anuH subsequently installs one isoprenyl group at the benzene ring to form (8S)-annullatin J. Enzymatic or nonenzymatic dihydro-benzofuran ring formation between the prenyl and the phenolic hydroxyl groups in (8S)-annullatin J results in two diastereomers (2S,9S)-annullatin H and compound 12. The intermediate (2S,9S)-annullatin H is then converted to (2S,9S)-annullatin D by the FAD-linked oxidoreductase anuG-catalyzed five-member lactone ring formation. The isomer 12 acts as a substrate for the short-chain dehydrogenase anuF and is oxidized to (2R)-annullatin F, which is subsequently acetylated by an acetyltransferase leading to (2R)-annullatin G formation. The remaining enzymes identified within the cluster, anuD, anuI and anuJ, seem not to be involved in annullatin biosynthesis. The sequence is that of FAD-dependent monooxygenase anuJ from Penicillium roqueforti (strain FM164).